A 395-amino-acid chain; its full sequence is Phosphoglycerate kinase (395 aa).

Residues D21 to N23, R36, H59 to R62, R113, and R146 each bind substrate. ATP is bound by residues K197, E324, and G350–T353.

Belongs to the phosphoglycerate kinase family. Monomer.

The protein resides in the cytoplasm. It catalyses the reaction (2R)-3-phosphoglycerate + ATP = (2R)-3-phospho-glyceroyl phosphate + ADP. It participates in carbohydrate degradation; glycolysis; pyruvate from D-glyceraldehyde 3-phosphate: step 2/5. The chain is Phosphoglycerate kinase from Acinetobacter baumannii (strain ATCC 17978 / DSM 105126 / CIP 53.77 / LMG 1025 / NCDC KC755 / 5377).